We begin with the raw amino-acid sequence, 1408 residues long: DNA-directed RNA polymerase subunit beta' (1408 aa).

Zn(2+) contacts are provided by Cys70, Cys72, Cys85, and Cys88. Residues Asp460, Asp462, and Asp464 each contribute to the Mg(2+) site. Residues Cys814, Cys887, Cys894, and Cys897 each contribute to the Zn(2+) site.

Belongs to the RNA polymerase beta' chain family. As to quaternary structure, the RNAP catalytic core consists of 2 alpha, 1 beta, 1 beta' and 1 omega subunit. When a sigma factor is associated with the core the holoenzyme is formed, which can initiate transcription. Mg(2+) is required as a cofactor. The cofactor is Zn(2+).

The catalysed reaction is RNA(n) + a ribonucleoside 5'-triphosphate = RNA(n+1) + diphosphate. In terms of biological role, DNA-dependent RNA polymerase catalyzes the transcription of DNA into RNA using the four ribonucleoside triphosphates as substrates. The polypeptide is DNA-directed RNA polymerase subunit beta' (Hydrogenovibrio crunogenus (strain DSM 25203 / XCL-2) (Thiomicrospira crunogena)).